We begin with the raw amino-acid sequence, 391 residues long: MFEEKNALRGTEIHRRERFDPGPELRALMAEGRMSVMESEESPGGRTGWLATGYEETRQVLGSDKFSAKLLFGGTAAGRIWPGFLNQYDPPEHTRLRRMVASAFTVRRMRDFRPRIEAVVKATLDDIEATGGPVDFVPRFAWPIATTVICDFLGIPRDDQAELSRVLHASRSERSGKRRVAAGNKYWTYMGQVAAKTRRDPGDDMFGAVVREHGDDITDAELLGVAAFVMGASGDQVARFLSAGAWLMVEHPEQFAVLRDDPDSVPDWLNEVARYLTSDEKTTPRIALEDVRIGDQLVKKGDAVTCSLLASNRHRFPDPEDRFDITREKPSHVTFGHGIHHCLGRPLAEMVFRTAIPALAHRFPTLRLAEPDREIKLGPPPFDVEALLLDW.

Residues 1-22 (MFEEKNALRGTEIHRRERFDPG) form a disordered region. Cys342 is a binding site for heme.

This sequence belongs to the cytochrome P450 family. It depends on heme as a cofactor.

It participates in antibiotic biosynthesis; vancomycin biosynthesis. Its function is as follows. Involved in the coupling of aromatic side chains of the heptapeptide of vancomycin. The chain is Cytochrome P450 165A3 (cyp165A3) from Amycolatopsis orientalis (Nocardia orientalis).